Here is a 266-residue protein sequence, read N- to C-terminus: Undecaprenyl-diphosphatase (266 aa).

The next 8 membrane-spanning stretches (helical) occupy residues 1-21, 40-60, 90-110, 113-133, 145-165, 188-208, 217-237, and 245-265; these read MTLL…FLPV, LPLY…LVVL, LLVV…KPIF, LNQP…LWFT, LSWL…IPGI, FSFL…IDEV, PLLG…LWLF, and FKWF…KVAM.

It belongs to the UppP family.

The protein resides in the cell inner membrane. It carries out the reaction di-trans,octa-cis-undecaprenyl diphosphate + H2O = di-trans,octa-cis-undecaprenyl phosphate + phosphate + H(+). Functionally, catalyzes the dephosphorylation of undecaprenyl diphosphate (UPP). Confers resistance to bacitracin. The sequence is that of Undecaprenyl-diphosphatase from Acaryochloris marina (strain MBIC 11017).